We begin with the raw amino-acid sequence, 363 residues long: Glyceraldehyde-3-phosphate dehydrogenase, muscle (363 aa).

The interval 1 to 176 is interaction with WARS; it reads MVKVGVNGFG…KYDKSLKIVS (176 aa). Lysine 3 bears the N6,N6-dimethyllysine mark. At asparagine 7 the chain carries Deamidated asparagine. NAD(+) is bound by residues 11-12 and aspartate 33; that span reads RI. Residue tyrosine 70 is modified to Phosphotyrosine. At lysine 89 the chain carries N6-acetyllysine. Deamidated asparagine is present on asparagine 92. Lysine 94 carries the N6,N6-dimethyllysine modification. The residue at position 98 (asparagine 98) is a Deamidated asparagine. Residue threonine 103 is modified to Phosphothreonine. 2 residues coordinate NAD(+): arginine 108 and serine 150. Phosphoserine occurs at positions 150 and 176. Asparagine 177 is subject to Deamidated asparagine. The residue at position 179 (serine 179) is a Phosphoserine. 179–181 is a D-glyceraldehyde 3-phosphate binding site; it reads SCT. Cysteine 180 functions as the Nucleophile in the catalytic mechanism. An ADP-ribosylcysteine; by autocatalysis; in irreversibly inhibited form modification is found at cysteine 180. Cysteine 180 bears the Cysteine persulfide mark. Cysteine 180 carries the post-translational modification S-(2-succinyl)cysteine. Cysteine 180 bears the S-nitrosocysteine; in reversibly inhibited form mark. Threonine 181 carries the post-translational modification Phosphothreonine. Asparagine 183 carries the deamidated asparagine modification. Residues threonine 205, threonine 210, and threonine 212 each carry the phosphothreonine modification. Residue threonine 210 coordinates D-glyceraldehyde 3-phosphate. Lysine 214 participates in a covalent cross-link: Glycyl lysine isopeptide (Lys-Gly) (interchain with G-Cter in SUMO2). At lysine 222 the chain carries N6,N6-dimethyllysine; alternate. N6-acetyllysine; alternate is present on lysine 222. The residue at position 222 (lysine 222) is an N6-malonyllysine; alternate. A Phosphothreonine modification is found at threonine 239. 239–240 serves as a coordination point for D-glyceraldehyde 3-phosphate; the sequence is TG. Lysine 243 carries the post-translational modification N6,N6-dimethyllysine; alternate. Lysine 243 is subject to N6-malonyllysine; alternate. An N6-acetyllysine modification is found at lysine 247. A Deamidated asparagine modification is found at asparagine 253. An N6,N6-dimethyllysine; alternate modification is found at lysine 255. Lysine 255 carries the post-translational modification N6-acetyllysine; alternate. Position 257 is a phosphothreonine (threonine 257). Arginine 262 lines the D-glyceraldehyde 3-phosphate pocket. The residue at position 265 (threonine 265) is a Phosphothreonine. Residue serine 269 is modified to Phosphoserine. S-(2-succinyl)cysteine is present on cysteine 275. The residue at position 275 (cysteine 275) is an S-nitrosocysteine. Lysine 282 carries the N6-acetyllysine modification. Lysine 291 is modified (N6,N6-dimethyllysine). Serine 340 is subject to Phosphoserine. Asparagine 344 bears the Deamidated asparagine mark. Asparagine 344 serves as a coordination point for NAD(+). At serine 361 the chain carries Phosphoserine. Position 362 is an N6,N6-dimethyllysine (lysine 362).

It belongs to the glyceraldehyde-3-phosphate dehydrogenase family. In terms of assembly, homotetramer. Interacts with TPPP; the interaction is direct. Interacts (when S-nitrosylated) with SIAH1; leading to nuclear translocation. Interacts with RILPL1/GOSPEL, leading to prevent the interaction between GAPDH and SIAH1 and prevent nuclear translocation. Interacts with CHP1; the interaction increases the binding of CHP1 with microtubules. Associates with microtubules. Interacts with EIF1AD, USP25, PRKCI and WARS1. Interacts with phosphorylated RPL13A; inhibited by oxidatively-modified low-densitity lipoprotein (LDL(ox)). Component of the GAIT complex. Interacts with FKBP6; leading to inhibit GAPDH catalytic activity. Interacts with TRAF2, promoting TRAF2 ubiquitination. Interacts with TRAF3, promoting TRAF3 ubiquitination. In terms of processing, ISGylated. S-nitrosylation of Cys-180 leads to interaction with SIAH1, followed by translocation to the nucleus S-nitrosylation of Cys-275 is induced by interferon-gamma and LDL(ox) implicating the iNOS-S100A8/9 transnitrosylase complex and seems to prevent interaction with phosphorylated RPL13A and to interfere with GAIT complex activity. Post-translationally, sulfhydration at Cys-180 increases catalytic activity.

The protein localises to the cytoplasm. The protein resides in the cytosol. It is found in the cytoskeleton. It localises to the nucleus. It carries out the reaction D-glyceraldehyde 3-phosphate + phosphate + NAD(+) = (2R)-3-phospho-glyceroyl phosphate + NADH + H(+). The enzyme catalyses S-nitroso-L-cysteinyl-[GAPDH] + L-cysteinyl-[protein] = L-cysteinyl-[GAPDH] + S-nitroso-L-cysteinyl-[protein]. Its pathway is carbohydrate degradation; glycolysis; pyruvate from D-glyceraldehyde 3-phosphate: step 1/5. With respect to regulation, glyceraldehyde-3-phosphate dehydrogenase activity is inhibited by fumarate, via the formation of S-(2-succinyl)cysteine residues. In terms of biological role, has both glyceraldehyde-3-phosphate dehydrogenase and nitrosylase activities, thereby playing a role in glycolysis and nuclear functions, respectively. Glyceraldehyde-3-phosphate dehydrogenase is a key enzyme in glycolysis that catalyzes the first step of the pathway by converting D-glyceraldehyde 3-phosphate (G3P) into 3-phospho-D-glyceroyl phosphate. Modulates the organization and assembly of the cytoskeleton. Facilitates the CHP1-dependent microtubule and membrane associations through its ability to stimulate the binding of CHP1 to microtubules. Component of the GAIT (gamma interferon-activated inhibitor of translation) complex which mediates interferon-gamma-induced transcript-selective translation inhibition in inflammation processes. Upon interferon-gamma treatment assembles into the GAIT complex which binds to stem loop-containing GAIT elements in the 3'-UTR of diverse inflammatory mRNAs (such as ceruplasmin) and suppresses their translation. Also plays a role in innate immunity by promoting TNF-induced NF-kappa-B activation and type I interferon production, via interaction with TRAF2 and TRAF3, respectively. Participates in nuclear events including transcription, RNA transport, DNA replication and apoptosis. Nuclear functions are probably due to the nitrosylase activity that mediates cysteine S-nitrosylation of nuclear target proteins such as SIRT1, HDAC2 and PRKDC. In Jaculus orientalis (Greater Egyptian jerboa), this protein is Glyceraldehyde-3-phosphate dehydrogenase, muscle.